Reading from the N-terminus, the 463-residue chain is Alpha-L-arabinofuranosidase B (463 aa).

The first 26 residues, 1–26, serve as a signal peptide directing secretion; sequence MIPQLNRNYAWAIALGLVARSSLVSA. The tract at residues 27-308 is catalytic; it reads GPCDIYASGG…ILGIGGHNSK (282 aa). Cysteine 29 and cysteine 39 form a disulfide bridge. Asparagine 81 carries an N-linked (GlcNAc...) asparagine glycan. 2 disulfides stabilise this stretch: cysteine 89/cysteine 94 and cysteine 184/cysteine 185. Aspartate 227 is a binding site for substrate. Catalysis depends on glutamate 229, which acts as the Nucleophile. A substrate-binding site is contributed by asparagine 230. Asparagine 280 carries N-linked (GlcNAc...) asparagine glycosylation. Position 304 (glycine 304) interacts with substrate. The ABD stretch occupies residues 309–463; that stretch reads LTVGSSISLR…VSWVVSASFA (155 aa). An N-linked (GlcNAc...) asparagine glycan is attached at asparagine 332. The cysteines at positions 366 and 404 are disulfide-linked. Substrate-binding residues include histidine 381, asparagine 383, phenylalanine 384, histidine 428, aspartate 430, leucine 433, and aspartate 453.

The protein belongs to the glycosyl hydrolase 54 family. In terms of processing, residue Asn-280 is mannosylated with up to 7 mannose residues.

Its subcellular location is the secreted. It carries out the reaction Hydrolysis of terminal non-reducing alpha-L-arabinofuranoside residues in alpha-L-arabinosides.. It functions in the pathway glycan metabolism; L-arabinan degradation. Functionally, secreted alpha-L-arabinofuranosidase that actively hydrolyzes p-NP-alpha-L-arabinofuranoside and is specific for furanose configuration of the carbohydrate ring. Also exhibits significant activity against polymeric arabinose-containing substrates such as arabinan and arabinoxylan, a major component of plant hemicellulose. The sequence is that of Alpha-L-arabinofuranosidase B (abfB) from Penicillium canescens.